The sequence spans 1253 residues: Cytoplasmic FMR1-interacting protein 1 (1253 aa).

The residue at position 583 (Ser-583) is a Phosphoserine. Phosphothreonine is present on Thr-1234.

Belongs to the CYFIP family. As to quaternary structure, component of the WAVE1 complex composed of ABI2, CYFIP1 or CYFIP2, BRK1, NCKAP1 and WASF1/WAVE1. Within the complex, a heterodimer containing NCKAP1 and CYFIP1 interacts with a heterotrimer formed by WAVE1, ABI2 and BRK1. Component of the CYFIP1-EIF4E-FMR1 complex which is composed of CYFIP, EIF4E and FMR1. Interacts with FMR1 but does not bind to related proteins FXR1 or FXR2. Interaction with EIF4E stimulates FMR1 binding. Component of the WAVE2 complex composed of ABI1, CYFIP1/SRA1, NCKAP1/NAP1 (NCKAP1l/HEM1 in hematopoietic cells) and WASF2/WAVE2. Interacts with the active GTP-bound form of RAC1. Interacts through its C-terminus with the C-terminus of DPYSL2/CRMP2 which is necessary for DPYSL2-induced axon outgrowth. Interacts with NYAP1, NYAP2 and MYO16. Interacts with TMEM108 (via N-terminus); the interaction associates TMEM108 with the WAVE1 complex.

It is found in the cytoplasm. Its subcellular location is the perinuclear region. The protein localises to the cell projection. It localises to the lamellipodium. The protein resides in the ruffle. It is found in the synapse. Its subcellular location is the synaptosome. Functionally, component of the CYFIP1-EIF4E-FMR1 complex which binds to the mRNA cap and mediates translational repression. In the CYFIP1-EIF4E-FMR1 complex this subunit is an adapter between EIF4E and FMR1. Promotes the translation repression activity of FMR1 in brain probably by mediating its association with EIF4E and mRNA. Regulates formation of membrane ruffles and lamellipodia. Plays a role in axon outgrowth. Binds to F-actin but not to RNA. Part of the WAVE complex that regulates actin filament reorganization via its interaction with the Arp2/3 complex. Actin remodeling activity is regulated by RAC1. Regulator of epithelial morphogenesis. As component of the WAVE1 complex, required for BDNF-NTRK2 endocytic trafficking and signaling from early endosomes. May act as an invasion suppressor in cancers. The chain is Cytoplasmic FMR1-interacting protein 1 from Homo sapiens (Human).